The sequence spans 317 residues: WSCD family member AAEL009094 (317 aa).

A helical transmembrane segment spans residues 8 to 28 (LFGLAGTILVYIGGILFLSFV). N-linked (GlcNAc...) asparagine glycosylation is found at N150, N226, and N232.

This sequence belongs to the WSCD family.

The protein resides in the membrane. This Aedes aegypti (Yellowfever mosquito) protein is WSCD family member AAEL009094.